A 138-amino-acid polypeptide reads, in one-letter code: Lutropin subunit beta (138 aa).

Positions 1-17 are cleaved as a signal peptide; the sequence is LQGLLLWLLLSVGGVWA. 6 disulfides stabilise this stretch: cysteine 26–cysteine 74, cysteine 40–cysteine 89, cysteine 43–cysteine 127, cysteine 51–cysteine 105, cysteine 55–cysteine 107, and cysteine 110–cysteine 117. Asparagine 30 carries N-linked (GlcNAc...) asparagine glycosylation.

The protein belongs to the glycoprotein hormones subunit beta family. In terms of assembly, heterodimer of a common alpha chain and a unique beta chain which confers biological specificity to thyrotropin, lutropin, follitropin and gonadotropin.

It is found in the secreted. Its function is as follows. Promotes spermatogenesis and ovulation by stimulating the testes and ovaries to synthesize steroids. The chain is Lutropin subunit beta (LHB) from Canis lupus familiaris (Dog).